The following is a 96-amino-acid chain: Small ribosomal subunit protein bS6 (96 aa).

It belongs to the bacterial ribosomal protein bS6 family.

Its function is as follows. Binds together with bS18 to 16S ribosomal RNA. This Thermobifida fusca (strain YX) protein is Small ribosomal subunit protein bS6.